Reading from the N-terminus, the 155-residue chain is MSPTRIYVDADACPVKDEIYKVAARHGLPVSVVAGNFIRVPADPSIERIAAGPGMDAADDWIAERAGPGDIVVTSDVPLASRCVKRGAEVLAPNGKPFSEASIGMTLAVRNLMTDLRSAGEVTGGPRGFSPRDRSAFLSALDTAIRRIQRSNKTA.

It belongs to the UPF0178 family.

The protein is UPF0178 protein RPC_3085 of Rhodopseudomonas palustris (strain BisB18).